Consider the following 286-residue polypeptide: MPELPEVEVVRRGLERWAAHRTVADVEVLHPRAVRRHVAGPDDFAHRLKDHRIGTPSRRGKYLWLPLEDTDQAVLAHLGMSGQLLVQPHETPAEKHLRIRVRFADALGTELRFVDQRTFGGLSLHDTSADGLPDVIAHIARDPLDPLFDDEAFHHALRRKRTTIKRALLDQSLISGVGNIYADEALWRARLHYERPTATLTRPRTTELLGHVRDVMNAALAVGGTSFDSLYVNVNGESGYFDRSLDAYGREGMPCRRCATPMRRRPWMNRSSYFCPKCQRPPRVTP.

The active-site Schiff-base intermediate with DNA is P2. E3 functions as the Proton donor in the catalytic mechanism. Catalysis depends on K61, which acts as the Proton donor; for beta-elimination activity. DNA contacts are provided by H96, R117, and K160. The FPG-type zinc finger occupies D246–R280. R270 functions as the Proton donor; for delta-elimination activity in the catalytic mechanism.

It belongs to the FPG family. Monomer. Requires Zn(2+) as cofactor.

It carries out the reaction Hydrolysis of DNA containing ring-opened 7-methylguanine residues, releasing 2,6-diamino-4-hydroxy-5-(N-methyl)formamidopyrimidine.. It catalyses the reaction 2'-deoxyribonucleotide-(2'-deoxyribose 5'-phosphate)-2'-deoxyribonucleotide-DNA = a 3'-end 2'-deoxyribonucleotide-(2,3-dehydro-2,3-deoxyribose 5'-phosphate)-DNA + a 5'-end 5'-phospho-2'-deoxyribonucleoside-DNA + H(+). Involved in base excision repair of DNA damaged by oxidation or by mutagenic agents. Acts as a DNA glycosylase that recognizes and removes damaged bases. Has a preference for oxidized purines, such as 7,8-dihydro-8-oxoguanine (8-oxoG). Has AP (apurinic/apyrimidinic) lyase activity and introduces nicks in the DNA strand. Cleaves the DNA backbone by beta-delta elimination to generate a single-strand break at the site of the removed base with both 3'- and 5'-phosphates. This is Formamidopyrimidine-DNA glycosylase (mutM) from Streptomyces coelicolor (strain ATCC BAA-471 / A3(2) / M145).